A 204-amino-acid chain; its full sequence is ATP-dependent Clp protease proteolytic subunit 1 (204 aa).

The active-site Nucleophile is S97. H122 is a catalytic residue.

This sequence belongs to the peptidase S14 family. As to quaternary structure, fourteen ClpP subunits assemble into 2 heptameric rings which stack back to back to give a disk-like structure with a central cavity, resembling the structure of eukaryotic proteasomes.

The protein localises to the cytoplasm. The enzyme catalyses Hydrolysis of proteins to small peptides in the presence of ATP and magnesium. alpha-casein is the usual test substrate. In the absence of ATP, only oligopeptides shorter than five residues are hydrolyzed (such as succinyl-Leu-Tyr-|-NHMec, and Leu-Tyr-Leu-|-Tyr-Trp, in which cleavage of the -Tyr-|-Leu- and -Tyr-|-Trp bonds also occurs).. Its function is as follows. Cleaves peptides in various proteins in a process that requires ATP hydrolysis. Has a chymotrypsin-like activity. Plays a major role in the degradation of misfolded proteins. The protein is ATP-dependent Clp protease proteolytic subunit 1 of Nostoc sp. (strain PCC 7120 / SAG 25.82 / UTEX 2576).